The sequence spans 389 residues: Mitochondrial carrier homolog 1 (389 aa).

The tract at residues 1–78 is disordered; the sequence is MGASDPEVAP…PGAPGSGDNA (78 aa). The Mitochondrial intermembrane portion of the chain corresponds to 1–93; the sequence is MGASDPEVAP…LFVALGAGVT (93 aa). The segment covering 15-33 has biased composition (gly residues); that stretch reads GAAGMAGAGAGAGARGGAP. Arginine 29 bears the Omega-N-methylarginine mark. Solcar repeat units lie at residues 81 to 176 and 192 to 280; these read TEAL…FPPD and KKVV…INAY. Residues 94 to 104 traverse the membrane as a helical segment; that stretch reads ALSHPLLYVKL. Topologically, residues 105–155 are cytoplasmic; the sequence is LIQVGHEPMPPTLGTNVLGRKVLYLPSFFTYAKYIVQVDGKIGLFRGLSPR. The helical transmembrane segment at 156–176 threads the bilayer; that stretch reads LMSNALSTVTRGSMKKVFPPD. At 177–209 the chain is on the mitochondrial intermembrane side; the sequence is EMEQVSNKDDMKTSLKKVVKETSYEMMMQCVSR. Residues 210-229 form a helical membrane-spanning segment; that stretch reads MLAHPLHVISMRCMVQFVGR. Over 230 to 254 the chain is Cytoplasmic; sequence EAKYSGVLSSIGKIFKEEGLLGFFV. The chain crosses the membrane as a helical span at residues 255 to 279; that stretch reads GLIPHLLGDVVFLWGCNLLAHFINA. The Mitochondrial intermembrane portion of the chain corresponds to 280 to 322; sequence YLVDDSVSDTPGGLGNDQNPGSQFSQALAIRSYTKFVMGIAVS. The helical transmembrane segment at 323 to 342 threads the bilayer; the sequence is MLTYPFLLVGDLMAVNNCGL. At 343 to 371 the chain is on the cytoplasmic side; sequence RAGLPPYSPVFKSWIHCWKYLSVQGQLFR. Residues 372–389 form a helical membrane-spanning segment; the sequence is GSSLLFRRVSSGSCFALE.

The protein belongs to the mitochondrial carrier (TC 2.A.29) family. As to quaternary structure, interacts with PSEN1.

The protein resides in the mitochondrion outer membrane. Functionally, protein insertase that mediates insertion of transmembrane proteins into the mitochondrial outer membrane. Catalyzes insertion of proteins with alpha-helical transmembrane regions, such as signal-anchored, tail-anchored and multi-pass membrane proteins. Does not mediate insertion of beta-barrel transmembrane proteins. May play a role in apoptosis. The protein is Mitochondrial carrier homolog 1 (Mtch1) of Mus musculus (Mouse).